Here is a 353-residue protein sequence, read N- to C-terminus: Transcription factor MafA (353 aa).

The residue at position 14 (S14) is a Phosphoserine. K32 is covalently cross-linked (Glycyl lysine isopeptide (Lys-Gly) (interchain with G-Cter in SUMO2)). 2 disordered regions span residues 40-108 and 177-219; these read RFCH…GGTS and ADDM…GAGH. Residues 46 to 73 show a composition bias toward low complexity; the sequence is PPGSLSSTPLSTPCSSVPSSPSFCAPSP. S49 bears the Phosphoserine mark. A phosphothreonine mark is found at T53 and T57. Phosphoserine occurs at positions 61 and 65. Positions 74–93 are enriched in gly residues; sequence GTGGGGGAGGGGGSSQAGGA. Residues 183 to 210 show a composition bias toward basic residues; sequence GHHHGAHHAAHHHHAAHHHHHHHHHHGG. Positions 254-279 are basic motif; that stretch reads RLKQKRRTLKNRGYAQSCRFKRVQQR. In terms of domain architecture, bZIP spans 254–317; the sequence is RLKQKRRTLK…DLYKEKYEKL (64 aa). A leucine-zipper region spans residues 282–303; the sequence is LESEKCQLQSQVEQLKLEVGRL. The disordered stretch occupies residues 315–353; the sequence is EKLAGRGGPGSAGGAGFPREPSPPQAGPGGAKGTADFFL. Gly residues predominate over residues 319-330; sequence GRGGPGSAGGAG.

It belongs to the bZIP family. Maf subfamily. In terms of assembly, forms homodimers or heterodimers. Monomers and dimers are able to bind DNA, but the off-rate is faster for monomers. Interacts with NEUROD1 and PDX1. May interact with MAFB, FOS, JUN and PCAF. In terms of processing, ubiquitinated, leading to its degradation by the proteasome. Phosphorylated at tyrosines. In terms of tissue distribution, expressed in the islets of Langerhans (at protein level).

It is found in the nucleus. In terms of biological role, transcription factor that activates insulin gene expression. Acts synergistically with NEUROD1/BETA2 and PDX1. Binds the insulin enhancer C1/RIPE3b element. Binds to consensus TRE-type MARE 5'-TGCTGACTCAGCA-3' DNA sequence. In Homo sapiens (Human), this protein is Transcription factor MafA (MAFA).